We begin with the raw amino-acid sequence, 386 residues long: 8-amino-7-oxononanoate synthase (386 aa).

Residues Arg-22 and Arg-29 each contribute to the substrate site. Residue 109–110 (GY) participates in pyridoxal 5'-phosphate binding. Substrate is bound at residue His-134. Residues Ser-182, 207–210 (DDAH), and 237–240 (TLSK) each bind pyridoxal 5'-phosphate. Lys-240 carries the N6-(pyridoxal phosphate)lysine modification. Position 349 (Thr-349) interacts with substrate.

The protein belongs to the class-II pyridoxal-phosphate-dependent aminotransferase family. BioF subfamily. As to quaternary structure, homodimer. Requires pyridoxal 5'-phosphate as cofactor.

The catalysed reaction is 6-carboxyhexanoyl-[ACP] + L-alanine + H(+) = (8S)-8-amino-7-oxononanoate + holo-[ACP] + CO2. It functions in the pathway cofactor biosynthesis; biotin biosynthesis. Functionally, catalyzes the decarboxylative condensation of pimeloyl-[acyl-carrier protein] and L-alanine to produce 8-amino-7-oxononanoate (AON), [acyl-carrier protein], and carbon dioxide. In Beijerinckia indica subsp. indica (strain ATCC 9039 / DSM 1715 / NCIMB 8712), this protein is 8-amino-7-oxononanoate synthase.